A 318-amino-acid polypeptide reads, in one-letter code: Ribose-phosphate pyrophosphokinase 1 (318 aa).

ATP-binding positions include 43–45 (DGE) and 102–103 (RQ). Mg(2+)-binding residues include His-136 and Asp-176. Lys-199 is a catalytic residue. D-ribose 5-phosphate contacts are provided by residues Arg-201, Asp-225, and 229–233 (DTAGT).

This sequence belongs to the ribose-phosphate pyrophosphokinase family. Class I subfamily. Homohexamer. It depends on Mg(2+) as a cofactor.

It localises to the cytoplasm. It carries out the reaction D-ribose 5-phosphate + ATP = 5-phospho-alpha-D-ribose 1-diphosphate + AMP + H(+). It functions in the pathway metabolic intermediate biosynthesis; 5-phospho-alpha-D-ribose 1-diphosphate biosynthesis; 5-phospho-alpha-D-ribose 1-diphosphate from D-ribose 5-phosphate (route I): step 1/1. Its function is as follows. Involved in the biosynthesis of the central metabolite phospho-alpha-D-ribosyl-1-pyrophosphate (PRPP) via the transfer of pyrophosphoryl group from ATP to 1-hydroxyl of ribose-5-phosphate (Rib-5-P). The protein is Ribose-phosphate pyrophosphokinase 1 of Listeria monocytogenes serotype 4b (strain F2365).